Consider the following 65-residue polypeptide: Conotoxin Cal1.5 (65 aa).

An N-terminal signal peptide occupies residues 1 to 18 (MRCLPVFIILLLLASTAA). Positions 19–49 (VDVAGSKLKRRLERKPYQGSQAYVKKTAFGL) are excised as a propeptide. Intrachain disulfides connect Cys52–Cys62 and Cys53–Cys59. Residue Pro61 is modified to 4-hydroxyproline.

This sequence belongs to the conotoxin T superfamily. Expressed by the venom duct.

It is found in the secreted. In terms of biological role, probable neurotoxin with unknown target. Possibly targets ion channels. This chain is Conotoxin Cal1.5, found in Californiconus californicus (California cone).